The following is a 146-amino-acid chain: Large ribosomal subunit protein uL15 (146 aa).

The span at 1–13 shows a compositional bias: basic and acidic residues; sequence MKLHELKAAEGSR. Residues 1 to 61 form a disordered region; it reads MKLHELKAAE…GGQTPLFRRM (61 aa). 2 stretches are compositionally biased toward gly residues: residues 23–35 and 42–52; these read TSSG…GRGQ and SGGGVRLGFEG.

It belongs to the universal ribosomal protein uL15 family. As to quaternary structure, part of the 50S ribosomal subunit.

Its function is as follows. Binds to the 23S rRNA. The polypeptide is Large ribosomal subunit protein uL15 (Streptococcus uberis (strain ATCC BAA-854 / 0140J)).